A 33-amino-acid polypeptide reads, in one-letter code: Defensin-1 (33 aa).

3 disulfide bridges follow: Cys4–Cys32, Cys6–Cys21, and Cys11–Cys31.

It belongs to the alpha-defensin family.

It is found in the secreted. In terms of biological role, has antibacterial activity against the Gram-negative bacterium E.coli and the Gram-positive bacteria L.monocytogenes and S.aureus. Has antifungal activity against C.albicans. In Papio hamadryas (Hamadryas baboon), this protein is Defensin-1.